An 880-amino-acid chain; its full sequence is Calcium-transporting ATPase lmo0841 (880 aa).

A run of 4 helical transmembrane segments spans residues 47–67, 68–88, 243–263, and 271–291; these read LWKL…VIAA, LVQL…VLIV, LGLG…GRVL, and MATA…AAIP. Val287, Ala288, Ile290, and Glu292 together coordinate Ca(2+). Residue Asp334 is the 4-aspartylphosphate intermediate of the active site. Transmembrane regions (helical) follow at residues 681 to 701, 707 to 727, 756 to 776, 819 to 839, and 854 to 874; these read IAYL…ALVL, FTAL…AIAL, AVIS…YIGM, YVIG…LPGA, and WSIA…IKVV. Asn716 and Asp720 together coordinate Ca(2+).

The protein belongs to the cation transport ATPase (P-type) (TC 3.A.3) family. Type IIA subfamily.

The protein localises to the cell membrane. The enzyme catalyses Ca(2+)(in) + ATP + H2O = Ca(2+)(out) + ADP + phosphate + H(+). Phosphorylation is inhibited by EGTA and vanadate. ATPase activity is stimulated by Sr(2+). Inhibited by very high concentrations of cyclopiazonic acid (CPA). Its function is as follows. Catalyzes the hydrolysis of ATP coupled with the transport of calcium. The transport is electrogenic with a probable ATP:Ca(2+):H(+) stoichiometry of 1:1:1. May have an important role in survival of the bacterium when stressed by a combination of a high calcium concentration and alkaline pH. The protein is Calcium-transporting ATPase lmo0841 of Listeria monocytogenes serovar 1/2a (strain ATCC BAA-679 / EGD-e).